Reading from the N-terminus, the 319-residue chain is tRNA-modifying protein YgfZ (319 aa).

Folate-binding residues include Trp-27 and Trp-189.

This sequence belongs to the tRNA-modifying YgfZ family.

It localises to the cytoplasm. In terms of biological role, folate-binding protein involved in regulating the level of ATP-DnaA and in the modification of some tRNAs. It is probably a key factor in regulatory networks that act via tRNA modification, such as initiation of chromosomal replication. The polypeptide is tRNA-modifying protein YgfZ (Buchnera aphidicola subsp. Schizaphis graminum (strain Sg)).